A 925-amino-acid chain; its full sequence is Collagen alpha-2(I) chain (925 aa).

The segment at 1–925 (SGGFDFSFLP…FGYEGDFYRA (925 aa)) is disordered. Residues Pro-10 and Pro-13 each carry the 4-hydroxyproline modification. Gly residues predominate over residues 22–34 (RYYGVGLGPGPMG). Positions 35-74 (LMGPRGPPGASGAPGPQGFQGPAGEPGEPGQTGPAGARGP) are enriched in low complexity. Pro-42 and Pro-48 each carry 4-hydroxyproline. Residue Lys-103 is modified to 5-hydroxylysine; alternate. Residue Lys-103 is glycosylated (O-linked (Gal...) hydroxylysine; alternate). Over residues 154-171 (DGSVGPVGPAGPIGSAGP) the composition is skewed to low complexity. Positions 271 to 280 (GESGGKGEPG) are enriched in gly residues. Low complexity predominate over residues 281–291 (SAGPQGPPGSS). A compositionally biased stretch (gly residues) spans 306-315 (GLRGGPGSRG). A 4-hydroxyproline mark is found at Pro-317, Pro-332, and Pro-335. Low complexity predominate over residues 363-379 (IDGRPGPIGPAGARGEA). The segment covering 423–432 (GVQGGKGEQG) has biased composition (gly residues). Low complexity-rich tracts occupy residues 479–496 (PGESGAVGPSGAIGSRGP) and 508–518 (EPGVVGAPGTA). Residues 519–528 (GPAGSGGLPG) show a composition bias toward gly residues. Composition is skewed to low complexity over residues 551–595 (VGTT…PRGS) and 602–622 (VGPAGPNGFAGPAGAAGQPGA). Basic and acidic residues predominate over residues 623–632 (KGERGTKGPK). Residues 640–650 (PTGPVGSAGPA) show a composition bias toward low complexity. The segment covering 660-669 (GSRGDGGPPG) has biased composition (gly residues). A compositionally biased stretch (low complexity) spans 671-680 (TGFPGAAGRT). Positions 696–718 (GAAGKGDQGPVGRGETGAGGPPG) are enriched in gly residues. Composition is skewed to low complexity over residues 719–753 (FTGEKGPSGEPGTAGPPGTAGPQGLLGAPGILGLP) and 761–771 (LPGVAGAVGEP). Gly residues predominate over residues 772 to 782 (GPLGIGPPGAR). The segment covering 791–806 (EPGPVGSVGPVGALGP) has biased composition (low complexity). A compositionally biased stretch (basic and acidic residues) spans 816–827 (RGDKGEPGEKGP). Over residues 897–907 (PAGPPGPPGPP) the composition is skewed to pro residues.

The protein belongs to the fibrillar collagen family. Trimers of one alpha 2(I) and two alpha 1(I) chains. Interacts (via C-terminus) with TMEM131 (via PapD-L domain); the interaction is direct and is involved in assembly and TRAPPIII ER-to-Golgi transport complex-dependent secretion of collagen. Post-translationally, prolines at the third position of the tripeptide repeating unit (G-X-Y) are hydroxylated in some or all of the chains. As to expression, expressed in bones.

Its subcellular location is the secreted. The protein resides in the extracellular space. The protein localises to the extracellular matrix. In terms of biological role, type I collagen is a member of group I collagen (fibrillar forming collagen). This Acratocnus sp. (strain SLP-2019) (Ground sloth) protein is Collagen alpha-2(I) chain.